The following is a 593-amino-acid chain: Zinc metalloproteinase-disintegrin-like atrase-B (593 aa).

The N-terminal stretch at 1-20 is a signal peptide; sequence MIQALLVIICLAVFPHQGSS. The propeptide occupies 21–191; the sequence is IILESGNVND…DESIEKTSQL (171 aa). The region spanning 205 to 400 is the Peptidase M12B domain; sequence KYIEFYVIVD…DRPQCILNKP (196 aa). Ca(2+) contacts are provided by E208 and D292. 3 disulfides stabilise this stretch: C316–C395, C356–C379, and C358–C363. N319 is a glycosylation site (N-linked (GlcNAc...) asparagine). Position 341 (H341) interacts with Zn(2+). Residue E342 is part of the active site. H345 and H351 together coordinate Zn(2+). 8 residues coordinate Ca(2+): C395, N398, I410, N413, F415, E417, E420, and D423. In terms of domain architecture, Disintegrin spans 408–477; the sequence is PPICGNYFVE…ECPTDSLQRN (70 aa). 11 cysteine pairs are disulfide-bonded: C422/C435, C424/C430, C434/C440, C449/C469, C456/C488, C481/C493, C500/C550, C515/C558, C528/C538, C545/C581, and C575/C586. A D/ECD-tripeptide motif is present at residues 455 to 457; sequence DCD. 4 residues coordinate Ca(2+): D457, L458, E460, and D472. N-linked (GlcNAc...) asparagine glycosylation occurs at N490.

Belongs to the venom metalloproteinase (M12B) family. P-III subfamily. P-IIIa sub-subfamily. Monomer. The cofactor is Zn(2+). Expressed by the venom gland.

The protein resides in the secreted. With respect to regulation, inhibited by EDTA, EGTA, 1,10-phenanthroline and DTT. Not inhibited by PMSF and SBTI. Its function is as follows. Snake venom zinc protease that inhibits the classical and alternative pathways of complement by cleaving factor B, C6, C7, and C8. Also slowly and selectively degrades alpha-chain of fibrinogen (FGA), and shows edema-inducing activity. This is Zinc metalloproteinase-disintegrin-like atrase-B from Naja atra (Chinese cobra).